A 356-amino-acid polypeptide reads, in one-letter code: Protein RecA (356 aa).

77 to 84 (GPESSGKT) is an ATP binding site.

It belongs to the RecA family.

It localises to the cytoplasm. Its function is as follows. Can catalyze the hydrolysis of ATP in the presence of single-stranded DNA, the ATP-dependent uptake of single-stranded DNA by duplex DNA, and the ATP-dependent hybridization of homologous single-stranded DNAs. It interacts with LexA causing its activation and leading to its autocatalytic cleavage. This is Protein RecA from Caulobacter sp. (strain K31).